We begin with the raw amino-acid sequence, 306 residues long: N-acetylmuramic acid 6-phosphate etherase (306 aa).

The SIS domain maps to 55–218 (IVPRMKKGGR…STGVMIKLGK (164 aa)). The active-site Proton donor is Glu83. Glu114 is an active-site residue.

It belongs to the GCKR-like family. MurNAc-6-P etherase subfamily. Homodimer.

The catalysed reaction is N-acetyl-D-muramate 6-phosphate + H2O = N-acetyl-D-glucosamine 6-phosphate + (R)-lactate. It functions in the pathway amino-sugar metabolism; N-acetylmuramate degradation. Its function is as follows. Specifically catalyzes the cleavage of the D-lactyl ether substituent of MurNAc 6-phosphate, producing GlcNAc 6-phosphate and D-lactate. This Caldanaerobacter subterraneus subsp. tengcongensis (strain DSM 15242 / JCM 11007 / NBRC 100824 / MB4) (Thermoanaerobacter tengcongensis) protein is N-acetylmuramic acid 6-phosphate etherase.